We begin with the raw amino-acid sequence, 253 residues long: DNA repair protein RecO (253 aa).

The protein belongs to the RecO family.

In terms of biological role, involved in DNA repair and RecF pathway recombination. The polypeptide is DNA repair protein RecO (Streptococcus agalactiae serotype Ia (strain ATCC 27591 / A909 / CDC SS700)).